The following is an 801-amino-acid chain: Leucine--tRNA ligase (801 aa).

The 'HIGH' region motif lies at 40–51; the sequence is PYPSGAGLHVGH. Positions 576-580 match the 'KMSKS' region motif; it reads KMSKS. Residue Lys579 coordinates ATP.

Belongs to the class-I aminoacyl-tRNA synthetase family.

The protein localises to the cytoplasm. It carries out the reaction tRNA(Leu) + L-leucine + ATP = L-leucyl-tRNA(Leu) + AMP + diphosphate. In Exiguobacterium sibiricum (strain DSM 17290 / CCUG 55495 / CIP 109462 / JCM 13490 / 255-15), this protein is Leucine--tRNA ligase.